Reading from the N-terminus, the 448-residue chain is MAMSELGTRKPSDGTVSHLLNVVESELQAGREKGDPTEKQLQIILEDAPLWQRFKEVTNEMIVTKNGRRMFPVLKISVTGLDPNAMYSLLLDFVPTDSHRWKYVNGEWVPAGKPEVSSHSCVYIHPDSPNFGAHWMKAPISFSKVKLTNKLNGGGQIMLNSLHKYEPQVHIVRVGSAHRMVTNCSFPETQFIAVTAYQNEEITALKIKYNPFAKAFLDAKERNHLRDVPEAISESQHVTYSHLGGWIFSNPDGVCTAGNSNYQYAAPLPLPAPHTHHGCEHYSGLRGHRQAPYPSAYMHRNHSPSVNLIESSSNNLQVFSGPDSWTSLSSTPHASILSVPHTNGPINPGPSPYPCLWTISNGAGGPSGPGPEVHASTPGAFLLGNPAVTSPPSVLSTQAPTSAGVEVLGEPSLTSIAVSTWTAVASHPFAGWGGPGAGGHHSPSSLDG.

The segment at residues 45–218 (LEDAPLWQRF…YNPFAKAFLD (174 aa)) is a DNA-binding region (T-box).

It is found in the nucleus. Its function is as follows. Transcriptional regulator involved in developmental processes. Can activate POMC gene expression and repress the alpha glycoprotein subunit and thyroid-stimulating hormone beta promoters. The sequence is that of T-box transcription factor TBX19 from Homo sapiens (Human).